We begin with the raw amino-acid sequence, 343 residues long: Aspartate carbamoyltransferase catalytic subunit (343 aa).

Residues Arg-91 and Thr-92 each coordinate carbamoyl phosphate. L-aspartate is bound at residue Lys-119. Carbamoyl phosphate-binding residues include Arg-141, His-171, and Gln-174. Arg-204 and Arg-259 together coordinate L-aspartate. Carbamoyl phosphate contacts are provided by Gly-300 and Pro-301.

It belongs to the aspartate/ornithine carbamoyltransferase superfamily. ATCase family. As to quaternary structure, heterododecamer (2C3:3R2) of six catalytic PyrB chains organized as two trimers (C3), and six regulatory PyrI chains organized as three dimers (R2).

The enzyme catalyses carbamoyl phosphate + L-aspartate = N-carbamoyl-L-aspartate + phosphate + H(+). It participates in pyrimidine metabolism; UMP biosynthesis via de novo pathway; (S)-dihydroorotate from bicarbonate: step 2/3. Functionally, catalyzes the condensation of carbamoyl phosphate and aspartate to form carbamoyl aspartate and inorganic phosphate, the committed step in the de novo pyrimidine nucleotide biosynthesis pathway. The polypeptide is Aspartate carbamoyltransferase catalytic subunit (Burkholderia thailandensis (strain ATCC 700388 / DSM 13276 / CCUG 48851 / CIP 106301 / E264)).